The primary structure comprises 405 residues: Arginine deiminase (405 aa).

The active-site Amidino-cysteine intermediate is C395.

This sequence belongs to the arginine deiminase family.

The protein resides in the cytoplasm. The catalysed reaction is L-arginine + H2O = L-citrulline + NH4(+). The protein operates within amino-acid degradation; L-arginine degradation via ADI pathway; carbamoyl phosphate from L-arginine: step 1/2. This chain is Arginine deiminase, found in Rhodococcus jostii (strain RHA1).